We begin with the raw amino-acid sequence, 488 residues long: N-succinylglutamate 5-semialdehyde dehydrogenase (488 aa).

221–226 (GSSRTG) provides a ligand contact to NAD(+). Catalysis depends on residues Glu-244 and Cys-278.

It belongs to the aldehyde dehydrogenase family. AstD subfamily.

It catalyses the reaction N-succinyl-L-glutamate 5-semialdehyde + NAD(+) + H2O = N-succinyl-L-glutamate + NADH + 2 H(+). Its pathway is amino-acid degradation; L-arginine degradation via AST pathway; L-glutamate and succinate from L-arginine: step 4/5. Its function is as follows. Catalyzes the NAD-dependent reduction of succinylglutamate semialdehyde into succinylglutamate. This Pseudomonas fluorescens (strain Pf0-1) protein is N-succinylglutamate 5-semialdehyde dehydrogenase.